The sequence spans 265 residues: Cytosolic Fe-S cluster assembly factor NUBP2 homolog (265 aa).

An ATP-binding site is contributed by 22-29; sequence GKGGVGKS. [4Fe-4S] cluster contacts are provided by Cys-196 and Cys-199.

This sequence belongs to the Mrp/NBP35 ATP-binding proteins family. NUBP2/CFD1 subfamily. As to quaternary structure, heterotetramer of 2 NUBP1 and 2 NUBP2 chains. The cofactor is [4Fe-4S] cluster.

Its subcellular location is the cytoplasm. In terms of biological role, component of the cytosolic iron-sulfur (Fe/S) protein assembly (CIA) machinery. Required for maturation of extramitochondrial Fe-S proteins. The NUBP1-NUBP2 heterotetramer forms a Fe-S scaffold complex, mediating the de novo assembly of an Fe-S cluster and its transfer to target apoproteins. In Trichoplax adhaerens (Trichoplax reptans), this protein is Cytosolic Fe-S cluster assembly factor NUBP2 homolog.